A 176-amino-acid chain; its full sequence is Peptide deformylase (176 aa).

2 residues coordinate Fe cation: C97 and H139. E140 is a catalytic residue. H143 lines the Fe cation pocket.

The protein belongs to the polypeptide deformylase family. Fe(2+) is required as a cofactor.

It carries out the reaction N-terminal N-formyl-L-methionyl-[peptide] + H2O = N-terminal L-methionyl-[peptide] + formate. Removes the formyl group from the N-terminal Met of newly synthesized proteins. Requires at least a dipeptide for an efficient rate of reaction. N-terminal L-methionine is a prerequisite for activity but the enzyme has broad specificity at other positions. The chain is Peptide deformylase from Thermomicrobium roseum (strain ATCC 27502 / DSM 5159 / P-2).